The primary structure comprises 315 residues: Glutamyl-Q tRNA(Asp) synthetase (315 aa).

Residues 21–25 (RFAPS) and Glu-63 each bind L-glutamate. Positions 24–34 (PSPSGLLHFGS) match the 'HIGH' region motif. 4 residues coordinate Zn(2+): Cys-119, Cys-121, Tyr-133, and Cys-137. L-glutamate-binding residues include Tyr-190 and Arg-208. The 'KMSKS' region signature appears at 251–255 (KLSKQ). Lys-254 is an ATP binding site.

Belongs to the class-I aminoacyl-tRNA synthetase family. GluQ subfamily. Zn(2+) serves as cofactor.

Functionally, catalyzes the tRNA-independent activation of glutamate in presence of ATP and the subsequent transfer of glutamate onto a tRNA(Asp). Glutamate is transferred on the 2-amino-5-(4,5-dihydroxy-2-cyclopenten-1-yl) moiety of the queuosine in the wobble position of the QUC anticodon. The chain is Glutamyl-Q tRNA(Asp) synthetase from Colwellia psychrerythraea (strain 34H / ATCC BAA-681) (Vibrio psychroerythus).